Consider the following 261-residue polypeptide: tRNA (guanine-N(7)-)-methyltransferase (261 aa).

S-adenosyl-L-methionine contacts are provided by Glu75, Glu100, Asp127, and Asp150. Residue Asp150 is part of the active site. Lys154 contacts substrate. Residues 156-161 (RHNKRR) form an interaction with RNA region. Substrate-binding positions include Asp186 and 223-226 (THFE).

It belongs to the class I-like SAM-binding methyltransferase superfamily. TrmB family.

The catalysed reaction is guanosine(46) in tRNA + S-adenosyl-L-methionine = N(7)-methylguanosine(46) in tRNA + S-adenosyl-L-homocysteine. The protein operates within tRNA modification; N(7)-methylguanine-tRNA biosynthesis. In terms of biological role, catalyzes the formation of N(7)-methylguanine at position 46 (m7G46) in tRNA. This chain is tRNA (guanine-N(7)-)-methyltransferase, found in Xanthomonas campestris pv. campestris (strain 8004).